Consider the following 206-residue polypeptide: MATAWGLRWGLSRTGTLLLAPPARCARRALHRQVDGTTFQSIYSLDKLYPESKGADTAWKVPEHAKQASSYIPLDRLSISYCRSSGPGGQNVNKVNSKAEVRFHLASADWIEEPVRQKIALTHKNKINKAGELVLTSESSRYQFRNLAECLQKIRDMIAEASQVPKEPSKEDARLQRLRIEKMNRERLRQKRLNSALKTSRRMTMD.

A mitochondrion-targeting transit peptide spans 1 to 29; that stretch reads MATAWGLRWGLSRTGTLLLAPPARCARRA. Position 90 is an N5-methylglutamine (glutamine 90).

The protein belongs to the prokaryotic/mitochondrial release factor family. Mitochondrion-specific ribosomal protein mL62 subfamily. In terms of assembly, component of the mitochondrial ribosome large subunit (39S) which comprises a 16S rRNA and about 50 distinct proteins. In terms of processing, methylation of glutamine in the GGQ triplet by HEMK1.

It localises to the mitochondrion. The catalysed reaction is an N-acyl-L-alpha-aminoacyl-tRNA + H2O = an N-acyl-L-amino acid + a tRNA + H(+). Functionally, essential peptidyl-tRNA hydrolase component of the mitochondrial large ribosomal subunit. Acts as a codon-independent translation release factor that has lost all stop codon specificity and directs the termination of translation in mitochondrion, possibly in case of abortive elongation. May be involved in the hydrolysis of peptidyl-tRNAs that have been prematurely terminated and thus in the recycling of stalled mitochondrial ribosomes. In Mus musculus (Mouse), this protein is Large ribosomal subunit protein mL62.